Reading from the N-terminus, the 44-residue chain is Photosystem I reaction center subunit IX (44 aa).

A helical transmembrane segment spans residues 7 to 27 (YLSVAPVLSTLWFGALAGLLI).

This sequence belongs to the PsaJ family.

Its subcellular location is the plastid. It is found in the chloroplast thylakoid membrane. May help in the organization of the PsaE and PsaF subunits. This is Photosystem I reaction center subunit IX from Eucalyptus globulus subsp. globulus (Tasmanian blue gum).